Here is a 116-residue protein sequence, read N- to C-terminus: Hydrogenase maturation factor HypA (116 aa).

Residue His2 participates in Ni(2+) binding. Zn(2+) contacts are provided by Cys73, Cys76, Cys90, and Cys93.

This sequence belongs to the HypA/HybF family.

Involved in the maturation of [NiFe] hydrogenases. Required for nickel insertion into the metal center of the hydrogenase. The chain is Hydrogenase maturation factor HypA from Escherichia coli O157:H7.